Reading from the N-terminus, the 159-residue chain is MDITFIDETEKVPTEEIKEIENLLQFAAGFLEIAEDTEMSVTFTDNAGIQMINRDYRGKDMPTDVISFALEDEGEDELPIIFDDEELAELPRNLGDLIISTERAAEQAVEYGHTLEREMGFLAVHGFLHLNGYDHMEPEDEKEMFGLQKEILDAYGLKR.

Positions 125, 129, and 135 each coordinate Zn(2+).

The protein belongs to the endoribonuclease YbeY family. The cofactor is Zn(2+).

It localises to the cytoplasm. Its function is as follows. Single strand-specific metallo-endoribonuclease involved in late-stage 70S ribosome quality control and in maturation of the 3' terminus of the 16S rRNA. This Enterococcus faecalis (strain ATCC 700802 / V583) protein is Endoribonuclease YbeY.